Reading from the N-terminus, the 980-residue chain is Glutamate receptor ionotropic, kainate 5 (980 aa).

An N-terminal signal peptide occupies residues 1–14 (MPAELLLLLIVAFA). Topologically, residues 15–544 (SPSCQVLSSL…YFSFLDPFSP (530 aa)) are extracellular. Cystine bridges form between cysteine 36/cysteine 292, cysteine 83/cysteine 334, and cysteine 165/cysteine 170. Asparagine 219, asparagine 271, asparagine 285, asparagine 322, asparagine 372, asparagine 394, asparagine 400, asparagine 407, asparagine 414, and asparagine 478 each carry an N-linked (GlcNAc...) asparagine glycan. A helical membrane pass occupies residues 545 to 565 (AVWLFMLLAYLAVSCVLFLAA). Over 566-622 (RLSPYEWYNPHPCLRARPHILENQYTLGNSLWFPVGGFMQQGSEIMPRALSTRCVSG) the chain is Cytoplasmic. A helical membrane pass occupies residues 623–643 (VWWAFTLIIISSYTANLAAFL). Topologically, residues 644-803 (TVQRMEVPVE…HRAKGLGMEN (160 aa)) are extracellular. The N-linked (GlcNAc...) asparagine glycan is linked to asparagine 735. The helical transmembrane segment at 804–824 (IGGIFIVLICGLIIAVFVAVM) threads the bilayer. Over 825–980 (EFIWSTRRSA…AGPRELAEHE (156 aa)) the chain is Cytoplasmic. Disordered regions lie at residues 891 to 927 (YSAG…PTPC) and 944 to 980 (ASGA…AEHE). The segment covering 894–903 (GAGGDAGSAH) has biased composition (gly residues).

Belongs to the glutamate-gated ion channel (TC 1.A.10.1) family. GRIK5 subfamily. In terms of assembly, homotetramer. Heterotetramer with GRIK2. Can form functional heteromeric receptors with GRIK1 and GRIK2. Can form functional heteromeric receptors with GRIK3.

It is found in the cell membrane. The protein localises to the postsynaptic cell membrane. It localises to the presynaptic cell membrane. Ionotropic glutamate receptor that functions as a cation-permeable ligand-gated ion channel, gated by L-glutamate and the glutamatergic agonist kainic acid. Cannot form functional channels on its own and produces channel activity only in heteromeric assembly with GRIK1 and GRIK2 subunits. Can form functional heteromeric receptors with GRIK3. The sequence is that of Glutamate receptor ionotropic, kainate 5 (GRIK5) from Homo sapiens (Human).